A 766-amino-acid polypeptide reads, in one-letter code: Discoidin domain-containing receptor A (766 aa).

A signal peptide spans methionine 1–threonine 18. Over leucine 19–leucine 372 the chain is Extracellular. F5/8 type C domains follow at residues cysteine 24–cysteine 180 and serine 195–alanine 351. An intrachain disulfide couples cysteine 24 to cysteine 180. Asparagine 87, asparagine 103, asparagine 129, asparagine 242, asparagine 268, asparagine 311, and asparagine 353 each carry an N-linked (GlcNAc...) asparagine glycan. The chain crosses the membrane as a helical span at residues leucine 373–valine 393. Topologically, residues cysteine 394–aspartate 766 are cytoplasmic. Residues asparagine 475–serine 501 form a disordered region. Positions tyrosine 488–serine 501 are enriched in polar residues. The Protein kinase domain maps to leucine 519–aspartate 766. Residues isoleucine 525 to isoleucine 533 and lysine 547 each bind ATP.

The protein belongs to the protein kinase superfamily. Tyr protein kinase family. Insulin receptor subfamily. Expressed in neurons in head and tail, some motoneurons in ventral nerve cord, in PVP interneurons, pharynx and stomato-intestinal muscle.

It localises to the cell membrane. It is found in the cell projection. Its subcellular location is the axon. The protein resides in the perikaryon. Receptor which, together with svh-4, is involved in axon guidance to establish the tracts for the ventral and dorsal nerve cords during nervous system development. May play a role in axon regeneration following injury in D-type motor neurons. The sequence is that of Discoidin domain-containing receptor A from Caenorhabditis elegans.